Here is a 1028-residue protein sequence, read N- to C-terminus: RNA cytidine acetyltransferase 1 (1028 aa).

Residues 286–295 (GRGKSAALGL) and R460 each bind ATP. The region spanning 548–731 (VLLGPVDESK…FAPFYISQIP (184 aa)) is the N-acetyltransferase domain. Acetyl-CoA is bound by residues 619–621 (IAV), 626–632 (MKMGYGS), and K719. The segment at 989-1028 (ISIESTKTDNKKEKPSGFDKSAKKRGNDKHSSTSNKKRRA) is disordered. Over residues 994 to 1009 (TKTDNKKEKPSGFDKS) the composition is skewed to basic and acidic residues.

It belongs to the RNA cytidine acetyltransferase family. NAT10 subfamily.

It localises to the nucleus. The protein localises to the nucleolus. It catalyses the reaction a cytidine in 18S rRNA + acetyl-CoA + ATP + H2O = an N(4)-acetylcytidine in 18S rRNA + ADP + phosphate + CoA + H(+). The enzyme catalyses a cytidine in tRNA + acetyl-CoA + ATP + H2O = an N(4)-acetylcytidine in tRNA + ADP + phosphate + CoA + H(+). Its function is as follows. RNA cytidine acetyltransferase with specificity toward both 18S rRNA and tRNAs. Catalyzes the formation of N(4)-acetylcytidine (ac4C) in 18S rRNA. Required for early nucleolar cleavages of precursor rRNA at sites A0, A1 and A2 during 18S rRNA synthesis. Catalyzes the formation of ac4C in serine and leucine tRNAs. Requires a tRNA-binding adapter protein for full tRNA acetyltransferase activity but not for 18S rRNA acetylation. The chain is RNA cytidine acetyltransferase 1 from Arabidopsis thaliana (Mouse-ear cress).